The sequence spans 150 residues: 3-dehydroquinate dehydratase (150 aa).

Catalysis depends on Tyr26, which acts as the Proton acceptor. Residues Asn77, His83, and Asp90 each coordinate substrate. The active-site Proton donor is His103. Residues 104–105 (LS) and Arg114 each bind substrate.

It belongs to the type-II 3-dehydroquinase family. As to quaternary structure, homododecamer.

The catalysed reaction is 3-dehydroquinate = 3-dehydroshikimate + H2O. It functions in the pathway metabolic intermediate biosynthesis; chorismate biosynthesis; chorismate from D-erythrose 4-phosphate and phosphoenolpyruvate: step 3/7. In terms of biological role, catalyzes a trans-dehydration via an enolate intermediate. This is 3-dehydroquinate dehydratase from Pectobacterium atrosepticum (strain SCRI 1043 / ATCC BAA-672) (Erwinia carotovora subsp. atroseptica).